The sequence spans 212 residues: ATP-dependent Clp protease proteolytic subunit (212 aa).

S109 (nucleophile) is an active-site residue. H134 is an active-site residue.

Belongs to the peptidase S14 family. As to quaternary structure, fourteen ClpP subunits assemble into 2 heptameric rings which stack back to back to give a disk-like structure with a central cavity, resembling the structure of eukaryotic proteasomes.

Its subcellular location is the cytoplasm. It carries out the reaction Hydrolysis of proteins to small peptides in the presence of ATP and magnesium. alpha-casein is the usual test substrate. In the absence of ATP, only oligopeptides shorter than five residues are hydrolyzed (such as succinyl-Leu-Tyr-|-NHMec, and Leu-Tyr-Leu-|-Tyr-Trp, in which cleavage of the -Tyr-|-Leu- and -Tyr-|-Trp bonds also occurs).. Functionally, cleaves peptides in various proteins in a process that requires ATP hydrolysis. Has a chymotrypsin-like activity. Plays a major role in the degradation of misfolded proteins. This chain is ATP-dependent Clp protease proteolytic subunit, found in Bdellovibrio bacteriovorus (strain ATCC 15356 / DSM 50701 / NCIMB 9529 / HD100).